Reading from the N-terminus, the 1296-residue chain is Clustered mitochondria protein homolog (1296 aa).

A disordered region spans residues 1–31 (MTLMNGDGAHEHQAEAEPKQNGHEMGDQTEE). Positions 8-26 (GAHEHQAEAEPKQNGHEMG) are enriched in basic and acidic residues. The Clu domain maps to 333–575 (RAEDAYTSRL…RTFPPDLNFL (243 aa)). Residues 662–689 (LDGEAQLKQLEETMAAHKETVDTRSKEV) adopt a coiled-coil conformation. TPR repeat units follow at residues 970–1003 (AFHF…FNNV), 1012–1045 (CACL…SERI), 1096–1129 (ALLD…NSKY), and 1138–1171 (ALSH…YKNQ). The stretch at 1242-1274 (QKDLEHLKAEVQRRQQLQEAIKGAENHEAKTKE) forms a coiled coil. The tract at residues 1261–1296 (AIKGAENHEAKTKEPEMSETSDSNINAASVAPESSD) is disordered. Residues 1263 to 1276 (KGAENHEAKTKEPE) are compositionally biased toward basic and acidic residues. A compositionally biased stretch (polar residues) spans 1278-1296 (SETSDSNINAASVAPESSD).

This sequence belongs to the CLU family.

It is found in the cytoplasm. The protein localises to the cytoplasmic granule. Functionally, mRNA-binding protein involved in proper cytoplasmic distribution of mitochondria. Specifically binds mRNAs of nuclear-encoded mitochondrial proteins in the cytoplasm and regulates transport or translation of these transcripts close to mitochondria, playing a role in mitochondrial biogenesis. The polypeptide is Clustered mitochondria protein homolog (Xenopus tropicalis (Western clawed frog)).